We begin with the raw amino-acid sequence, 601 residues long: Putative helicase 7 (601 aa).

The 166-residue stretch at 17-182 folds into the Helicase ATP-binding domain; that stretch reads QSFLMSDKNL…IIDAEIIKTD (166 aa). 30-37 contributes to the ATP binding site; that stretch reads APTGTGKS. Positions 129 to 132 match the DEAH box motif; that stretch reads DEIH. Positions 208-375 constitute a Helicase C-terminal domain; sequence LKEDFIKKMV…VLEDFLLALI (168 aa).

This chain is Putative helicase 7 (SIFV0007), found in Saccharolobus islandicus (Sulfolobus islandicus).